The following is an 892-amino-acid chain: Ataxin-7 (892 aa).

Residues 1–15 (MSERAADDVRGEPRR) show a composition bias toward basic and acidic residues. 2 disordered regions span residues 1–74 (MSER…SAAA) and 195–247 (SKGG…SRVP). The span at 16–38 (AAAAAGGAAAAAARQQQQQQQQQ) shows a compositional bias: low complexity. The segment covering 39–55 (QPPPPQPQRQQHPPPPP) has biased composition (pro residues). Residues 195–222 (SKGGSASGSNRSSSGGVLSASSSSSKLL) show a composition bias toward low complexity. K257 is covalently cross-linked (Glycyl lysine isopeptide (Lys-Gly) (interchain with G-Cter in SUMO); alternate). K257 participates in a covalent cross-link: Glycyl lysine isopeptide (Lys-Gly) (interchain with G-Cter in SUMO2); alternate. Disordered stretches follow at residues 298–328 (PTLPSPGQILNGKGLPAPPTLEKKPEDNSNN), 389–505 (HKNK…ESVE), 616–730 (KSVP…SSHS), and 818–892 (SHGS…KARP). Basic and acidic residues-rich tracts occupy residues 318–327 (LEKKPEDNSN) and 389–403 (HKNKTREKELIRHPD). The SCA7 domain maps to 334–401 (KRLSEREFDP…KTREKELIRH (68 aa)). 3 stretches are compositionally biased toward pro residues: residues 405–419 (QQPPQPLRDPHPAPP), 448–458 (HTPSLPRPPGC), and 468–483 (IDPPPVHESPHPPLPA). Acidic residues predominate over residues 493-502 (EEGEGDDKEE). Over residues 616-629 (KSVPAHGTTLNAQP) the composition is skewed to polar residues. Residues 640 to 669 (SMQSRQVSSSSSSPSTPSGLSSVPSSPMSR) are compositionally biased toward low complexity. Residues 670–680 (KPQKLKSSKSL) show a composition bias toward basic residues. A compositionally biased stretch (polar residues) spans 685–695 (SSGNSTNCQNA). 2 stretches are compositionally biased toward low complexity: residues 716–730 (HSSSSSSSSSSSSHS) and 840–851 (SPSSSSINNSSS).

Belongs to the ataxin-7 family. Component of the SAGA transcription coactivator-HAT complex, at least composed of SUPT3H, GCN5L2, TAF5L, TAF6L, SUPT7L, TADA3L, TAD1L, TAF10, TAF12, TRRAP, TAF9 and ATXN7. The STAGA core complex is associated with a subcomplex required for histone deubiquitination composed of ATXN7L3, ENY2 and USP22. Interacts with SORBS1, PSMC1 and CRX. Interacts with TRRAP, GCN5L2 and TAF10. Interacts with alpha tubulin. Post-translationally, proteolytically cleaved by caspase-7 (CASP7). The cleavage may be involved in SCA7 degeneration: the isoform fragments may exert distinct toxic influences that could contribute to selective neurodegeneration. In terms of processing, sumoylation decreases the aggregation propensity and cellular toxicity of forms with an expanded poly-Gln region but has no effect on subcellular location or interaction with components of the STAGA complex. As to expression, isoform a is expressed in CNS, but is expressed predominantly in the peripherical tissues. Isoform b is expressed in CNS. Also highly expressed in the frontal lobe, skeletal muscle and spinal cord and is expressed at a lower level in the lung, lymphoblast and intestine.

It is found in the nucleus. The protein resides in the nucleolus. It localises to the nucleus matrix. The protein localises to the cytoplasm. Its subcellular location is the cytoskeleton. Its function is as follows. Acts as a component of the SAGA (aka STAGA) transcription coactivator-HAT complex. Mediates the interaction of SAGA complex with the CRX and is involved in CRX-dependent gene activation. Probably involved in tethering the deubiquitination module within the SAGA complex. Necessary for microtubule cytoskeleton stabilization. Involved in neurodegeneration. The sequence is that of Ataxin-7 (ATXN7) from Homo sapiens (Human).